The sequence spans 293 residues: Insulin-like growth factor-binding protein 3 (293 aa).

The first 27 residues, 1 to 27, serve as a signal peptide directing secretion; the sequence is MQRARPALWAAALIALALLRGPPAARA. Residues 36–119 enclose the IGFBP N-terminal domain; the sequence is PVVRCEPCDA…LDGRGICANA (84 aa). Intrachain disulfides connect cysteine 40–cysteine 69, cysteine 43–cysteine 71, cysteine 51–cysteine 72, cysteine 60–cysteine 75, cysteine 83–cysteine 96, and cysteine 90–cysteine 116. 2 N-linked (GlcNAc...) asparagine glycosylation sites follow: asparagine 118 and asparagine 138. 2 disordered regions span residues 132 to 166 and 178 to 213; these read APPA…PDSK and KKGH…TEYG. The residue at position 150 (serine 150) is a Phosphoserine. Positions 178 to 192 are enriched in basic and acidic residues; sequence KKGHAKDSQRYKVDY. A compositionally biased stretch (polar residues) spans 193-204; sequence ESQSTDTQNFSS. Asparagine 201 carries an N-linked (GlcNAc...) asparagine glycan. Phosphoserine is present on serine 203. The Thyroglobulin type-1 domain occupies 212–287; that stretch reads YGPCRREMED…DVKGKGDVHC (76 aa). Intrachain disulfides connect cysteine 215–cysteine 242, cysteine 253–cysteine 264, and cysteine 266–cysteine 287.

As to quaternary structure, interacts with XLKD1. Binds IGF2 more than IGF1. Forms a ternary complex of about 140 to 150 kDa with IGF1 or IGF2 and a 85 kDa glycoprotein (ALS). Interacts with humanin; humanin competes with importin KPNB1 for binding to IGFBP3, blocking IGFBP3 nuclear import and IGFBP3-mediated apoptosis. Interacts with TMEM219. Interacts with RXRA; this interaction modulates the transcriptional activity of RXRA. Interacts with LRP1; this interaction mediates cell growth inhibition independent of IGF1. Post-translationally, phosphorylated by FAM20C in the extracellular medium. Phosphorylated by CK2; resulting in decreased nuclear localization.

The protein localises to the secreted. The protein resides in the nucleus. Its function is as follows. Multifunctional protein that plays a critical role in regulating the availability of IGFs such as IGF1 and IGF2 to their receptors and thereby regulates IGF-mediated cellular processes including proliferation, differentiation, and apoptosis in a cell-type specific manner. Also exhibits IGF-independent antiproliferative and apoptotic effects mediated by its receptor TMEM219/IGFBP-3R. Inhibits the positive effect of humanin on insulin sensitivity. Promotes testicular germ cell apoptosis. Acts via LRP-1/alpha2M receptor, also known as TGF-beta type V receptor, to mediate cell growth inhibition independent of IGF1. Mechanistically, induces serine-specific dephosphorylation of IRS1 or IRS2 upon ligation to its receptor, leading to the inhibitory cascade. In the nucleus, interacts with transcription factors such as retinoid X receptor-alpha/RXRA to regulate transcriptional signaling and apoptosis. In Sus scrofa (Pig), this protein is Insulin-like growth factor-binding protein 3 (IGFBP3).